We begin with the raw amino-acid sequence, 730 residues long: Cyclin-dependent kinase 12 (730 aa).

Disordered stretches follow at residues 1-230 (MEIS…APFS) and 246-283 (FSLS…IATR). Residues 9-21 (THERDRKGSYGHR) show a composition bias toward basic and acidic residues. The span at 57-67 (SISPQYKQRNW) shows a compositional bias: polar residues. Residues 75 to 94 (GRDRGRNDFSYRKKGKDYNK) show a composition bias toward basic and acidic residues. 2 stretches are compositionally biased toward basic residues: residues 95–122 (RRDK…KRRN) and 151–163 (KSKK…RKHS). Residues 194-203 (FNINPFQPMF) are compositionally biased toward low complexity. The segment covering 204 to 230 (SQPPPPPLPPNSQFMTPPPRPPPAPFS) has biased composition (pro residues). One can recognise a Protein kinase domain in the interval 313-605 (MLDQIGEGTY…AKEALNHPWI (293 aa)). ATP-binding positions include 317–325 (IGEGTYGQV), Lys-340, and 398–403 (EYVDHD). Asp-444 acts as the Proton acceptor in catalysis. The interval 623–730 (DCHEMWSKKQ…QSQYQSVFFK (108 aa)) is disordered. An ATP-binding site is contributed by His-625. The span at 676-688 (NHHHHHHHSHHHA) shows a compositional bias: basic residues. The span at 714-730 (NNHQPVPQSQYQSVFFK) shows a compositional bias: polar residues.

This sequence belongs to the protein kinase superfamily. CMGC Ser/Thr protein kinase family. CDC2/CDKX subfamily.

The protein resides in the nucleus. The enzyme catalyses [DNA-directed RNA polymerase] + ATP = phospho-[DNA-directed RNA polymerase] + ADP + H(+). It carries out the reaction L-seryl-[protein] + ATP = O-phospho-L-seryl-[protein] + ADP + H(+). The catalysed reaction is L-threonyl-[protein] + ATP = O-phospho-L-threonyl-[protein] + ADP + H(+). In terms of biological role, cyclin-dependent kinase which displays CTD kinase activity: hyperphosphorylates 'Ser-2' in the C-terminal heptapeptide repeat domain (CTD) of the largest RNA polymerase II subunit, thereby acting as a key regulator of transcription elongation. Required for normal reproduction. The polypeptide is Cyclin-dependent kinase 12 (Caenorhabditis elegans).